Reading from the N-terminus, the 762-residue chain is MASNERDAISWYQKKIGAYDQQIWEKSIEQTQIKGFKNKPKKMGHIKADLIDVDLIRGSTFAKAKPEIPWTSLTRKGLVRVVFFPLFSSWWIQVTSLRIFVWLLLLYLMQVIALVLYFMMPIVNVSEVLGPLCLMLLMGTVHCQIVSTQITRPSGNNGNRRRRKLRKTVNGDGSRENGNNSSDKARGVETLESAPLNGSFWRTLFGNRMKRVKLICNRGTETDYDSGCLHPIIKKRQCRPEIRMWQTREKAKFSDGEKGRRESFRRLGNGISDDLSSDDDGEAQTQMMILRRSVEGASSDNGCEIKSRKSILSRHLNTQVKKTTSKWCSVVRDSDSLAESEFESAAFSQGSRSGMSGGSRSLNMLRRDSESTRHDSETEDMLWDDLLHGPECRSSVTSDSEGAHVSSLHSGTKRDPKEDVFQQNHLFWLQNSSPASDRVSAIIWEGNECKKMDMSVLEISGIIMSRVNAYQQGVGYQMLGNIVTIGLAFFPFLHRLFREKNLDQLKSISAEEILTLFCGAPPVTPIIILSIINFFERLCLTWMFFFMMCVAERTYKQRFLFAKLFSHITSARKARKYEIPHFRLKKVENIKIWLSLRSFLKRRGPQRSVDVVVSSVFLLTLSIAFICCAQVLRGHKTFLNDAYNWEFLIWESALLLFLLRLASLGSETNKKYSNVSILLTEQINLYLKMEKKPNKKEQLTLVNNVLKLSTKLLKELDTPFRLYGLTMNPLIYNITRVVILSAVSGVISDLLGFNIRLWKIKS.

One can recognise a PHTF domain in the interval 6-150; the sequence is RDAISWYQKK…VHCQIVSTQI (145 aa). 3 consecutive transmembrane segments (helical) span residues 77–97, 99–119, and 121–141; these read GLVRVVFFPLFSSWWIQVTSL, IFVWLLLLYLMQVIALVLYFM, and PIVNVSEVLGPLCLMLLMGTV. The interval 152–188 is disordered; that stretch reads RPSGNNGNRRRRKLRKTVNGDGSRENGNNSSDKARGV. N-linked (GlcNAc...) asparagine glycosylation is found at Asn179, Asn180, and Asn197. 5 positions are modified to phosphoserine: Ser272, Ser276, Ser277, Ser334, and Ser336. Disordered regions lie at residues 344–379 and 393–415; these read SAAFSQGSRSGMSGGSRSLNMLRRDSESTRHDSETE and RSSVTSDSEGAHVSSLHSGTKRD. Over residues 348-361 the composition is skewed to low complexity; sequence SQGSRSGMSGGSRS. The segment covering 365-376 has biased composition (basic and acidic residues); the sequence is LRRDSESTRHDS. N-linked (GlcNAc...) asparagine glycosylation is present at Asn431. 4 helical membrane passes run 473–493, 512–532, 611–631, and 645–665; these read GVGYQMLGNIVTIGLAFFPFL, EILTLFCGAPPVTPIIILSII, VVVSSVFLLTLSIAFICCAQV, and WEFLIWESALLLFLLRLASLG. Asn674 and Asn733 each carry an N-linked (GlcNAc...) asparagine glycan. Residues 737–757 form a helical membrane-spanning segment; that stretch reads VVILSAVSGVISDLLGFNIRL.

In terms of assembly, interacts with FEM1B.

The protein resides in the endoplasmic reticulum membrane. Its subcellular location is the golgi apparatus. It localises to the cis-Golgi network membrane. The sequence is that of Protein PHTF1 (PHTF1) from Bos taurus (Bovine).